The following is a 233-amino-acid chain: tRNA (guanine-N(7)-)-methyltransferase (233 aa).

S-adenosyl-L-methionine-binding residues include glutamate 62, glutamate 87, aspartate 116, and aspartate 138. Aspartate 138 is a catalytic residue. Residues lysine 142, aspartate 174, and 212 to 215 (TRYE) each bind substrate.

Belongs to the class I-like SAM-binding methyltransferase superfamily. TrmB family.

It carries out the reaction guanosine(46) in tRNA + S-adenosyl-L-methionine = N(7)-methylguanosine(46) in tRNA + S-adenosyl-L-homocysteine. It participates in tRNA modification; N(7)-methylguanine-tRNA biosynthesis. Its function is as follows. Catalyzes the formation of N(7)-methylguanine at position 46 (m7G46) in tRNA. This chain is tRNA (guanine-N(7)-)-methyltransferase, found in Bartonella henselae (strain ATCC 49882 / DSM 28221 / CCUG 30454 / Houston 1) (Rochalimaea henselae).